Consider the following 61-residue polypeptide: UPF0370 protein SG1720 (61 aa).

The helical transmembrane segment at Trp3 to Val23 threads the bilayer. Residues Asn37 to Asn47 show a composition bias toward basic and acidic residues. Residues Asn37 to Pro61 form a disordered region. The span at Trp51 to Pro61 shows a compositional bias: acidic residues.

This sequence belongs to the UPF0370 family.

The protein resides in the cell membrane. In Sodalis glossinidius (strain morsitans), this protein is UPF0370 protein SG1720.